Here is an 847-residue protein sequence, read N- to C-terminus: MSLWGLVSKMPPEKVQRLYVDFPQHLRHLLGDWLESQPWEFLVGSDAFCCNLASALLSDTVQHLQASVGEQGEGSTILQHISTLESIYQRDPLKLVATFRQILQGEKKAVMEQFRHLPMPFHWKQEELKFKTGLRRLQHRVGEIHLLREALQKGAEAGQVSLHSLIETPANGTGPSEALAMLLQETTGELEAAKALVLKRIQIWKRQQQLAGNGAPFEESLAPLQERCESLVDIYSQLQQEVGAAGGELEPKTRASLTGRLDEVLRTLVTSCFLVEKQPPQVLKTQTKFQAGVRFLLGLRFLGAPAKPPLVRADMVTEKQARELSVPQGPGAGAESTGEIINNTVPLENSIPGNCCSALFKNLLLKKIKRCERKGTESVTEEKCAVLFSASFTLGPGKLPIQLQALSLPLVVIVHGNQDNNAKATILWDNAFSEMDRVPFVVAERVPWEKMCETLNLKFMAEVGTNRGLLPEHFLFLAQKIFNDNSLSMEAFQHRSVSWSQFNKEILLGRGFTFWQWFDGVLDLTKRCLRSYWSDRLIIGFISKQYVTSLLLNEPDGTFLLRFSDSEIGGITIAHVIRGQDGSPQIENIQPFSAKDLSIRSLGDRIRDLAQLKNLYPKKPKDEAFRSHYKPEQMGKDGRGYVPATIKMTVERDQPLPTPELQMPTMVPSYDLGMAPDSSMSMQLGPDMVPQVYPPHSHSIPPYQGLSPEESVNVLSAFQEPHLQMPPSLGQMSLPFDQPHPQGLLPCQPQEHAVSSPDPLLCSDVTMVEDSCLSQPVTAFPQGTWIGEDIFPPLLPPTEQDLTKLLLEGQGESGGGSLGAQPLLQPSHYGQSGISMSHMDLRANPSW.

N-acetylserine is present on Ser2. In terms of domain architecture, SH2 spans 517 to 632 (WFDGVLDLTK…EAFRSHYKPE (116 aa)). Phosphotyrosine; by JAK is present on Tyr641. The short motif at 802–806 (LTKLL) is the LXXLL motif element. Positions 809–847 (GQGESGGGSLGAQPLLQPSHYGQSGISMSHMDLRANPSW) are disordered.

It belongs to the transcription factor STAT family. Forms a homodimer or a heterodimer with a related family member. Interacts with NCOA1 via its C-terminal LXXLL motif. Tyrosine phosphorylated on Tyr-641 following stimulation by IL4/interleukin-4. Tyrosine phosphorylated following stimulation by IL3/interleukin-3. Dephosphorylation on tyrosine residues by PTPN2 negatively regulates the IL4/interleukin-4 mediated signaling. Post-translationally, mono-ADP-ribosylated by PARP14.

The protein localises to the cytoplasm. Its subcellular location is the nucleus. Its function is as follows. Carries out a dual function: signal transduction and activation of transcription. Involved in IL4/interleukin-4- and IL3/interleukin-3-mediated signaling. The protein is Signal transducer and activator of transcription 6 (STAT6) of Homo sapiens (Human).